A 464-amino-acid chain; its full sequence is Citrate synthase, mitochondrial (464 aa).

A mitochondrion-targeting transit peptide spans Met1–Ser27. An SIFI-degron motif is present at residues Ala2–Leu21. N6-acetyllysine; alternate is present on Lys76. Lys76 is subject to N6-succinyllysine; alternate. N6-succinyllysine occurs at positions 103 and 193. The residue at position 226 (Ser226) is a Phosphoserine. His301 is an active-site residue. Residues Lys321 and Lys327 each carry the N6-acetyllysine; alternate modification. N6-succinyllysine; alternate occurs at positions 321 and 327. His347 is an active-site residue. Arg356 serves as a coordination point for oxaloacetate. Position 375 is an N6-acetyllysine; alternate (Lys375). Lys375 is subject to N6-succinyllysine; alternate. An N6-acetyllysine modification is found at Lys382. An N6-acetyllysine; alternate modification is found at Lys393. The residue at position 393 (Lys393) is an N6-succinyllysine; alternate. Lys395 carries the N6,N6,N6-trimethyllysine modification. Asp402 is a catalytic residue. Residues Arg428 and Arg448 each coordinate oxaloacetate. N6-succinyllysine is present on Lys450. Lys459 carries the N6-acetyllysine; alternate modification. Lys459 is subject to N6-succinyllysine; alternate.

It belongs to the citrate synthase family. Homodimer. Methylated. Trimethylation at Lys-395 by CSKMT decreases citrate synthase activity. In terms of processing, in response to mitochondrial stress, the precursor protein is ubiquitinated by the SIFI complex in the cytoplasm before mitochondrial import, leading to its degradation. Within the SIFI complex, UBR4 initiates ubiquitin chain that are further elongated or branched by KCMF1.

It is found in the mitochondrion matrix. It catalyses the reaction oxaloacetate + acetyl-CoA + H2O = citrate + CoA + H(+). It participates in carbohydrate metabolism; tricarboxylic acid cycle; isocitrate from oxaloacetate: step 1/2. Key enzyme of the Krebs tricarboxylic acid cycle which catalyzes the synthesis of citrate from acetyl coenzyme A and oxaloacetate. The sequence is that of Citrate synthase, mitochondrial (CS) from Sus scrofa (Pig).